A 501-amino-acid polypeptide reads, in one-letter code: Cytochrome P450 3A6 (501 aa).

Cys440 serves as a coordination point for heme.

The protein belongs to the cytochrome P450 family. It depends on heme as a cofactor.

The protein resides in the endoplasmic reticulum membrane. Its subcellular location is the microsome membrane. It catalyses the reaction an organic molecule + reduced [NADPH--hemoprotein reductase] + O2 = an alcohol + oxidized [NADPH--hemoprotein reductase] + H2O + H(+). In terms of biological role, exhibits progesterone 6 beta-hydroxylase activity. This is Cytochrome P450 3A6 (CYP3A6) from Oryctolagus cuniculus (Rabbit).